The chain runs to 522 residues: Cytochrome P450 4e5, mitochondrial (522 aa).

Residues E307 and C443 each contribute to the heme site.

It belongs to the cytochrome P450 family. Heme is required as a cofactor.

The protein localises to the mitochondrion. Its function is as follows. Probably involved in steroid hormones biosynthesis. The sequence is that of Cytochrome P450 4e5, mitochondrial (Cyp4e5) from Drosophila mettleri (Fruit fly).